We begin with the raw amino-acid sequence, 304 residues long: Protein Largen (304 aa).

Low complexity predominate over residues 1-22 (MSAKSKGNPSSSSAAEGPPAAS). Disordered stretches follow at residues 1 to 27 (MSAK…TKVK), 66 to 109 (QLED…PPAH), 114 to 133 (LTVL…TPVR), and 236 to 304 (EPVH…TTTV). The stretch at 33–70 (IVEDLELVLGDLKDVAKELKEVVDQIDTLTSDLQLEDE) forms a coiled coil. Residues 77 to 91 (TDTLNSSSSGTTASS) show a composition bias toward low complexity. Pro residues-rich tracts occupy residues 120-129 (PNPPPPPPRL) and 275-289 (FPPP…PAAP).

In terms of biological role, regulator of cell size that promotes cell size increase independently of mTOR and Hippo signaling pathways. Acts by stimulating the translation of specific mRNAs, including those encoding proteins affecting mitochondrial functions. Increases mitochondrial mass and respiration. The protein is Protein Largen (Prr16) of Mus musculus (Mouse).